Here is a 294-residue protein sequence, read N- to C-terminus: Cytidine deaminase (294 aa).

CMP/dCMP-type deaminase domains follow at residues 48 to 168 (DEDA…FGPK) and 186 to 294 (LTGD…VLLA). Position 89-91 (89-91 (NME)) interacts with substrate. Histidine 102 serves as a coordination point for Zn(2+). Glutamate 104 acts as the Proton donor in catalysis. The Zn(2+) site is built by cysteine 129 and cysteine 132.

Belongs to the cytidine and deoxycytidylate deaminase family. In terms of assembly, homodimer. It depends on Zn(2+) as a cofactor.

It carries out the reaction cytidine + H2O + H(+) = uridine + NH4(+). The catalysed reaction is 2'-deoxycytidine + H2O + H(+) = 2'-deoxyuridine + NH4(+). Functionally, this enzyme scavenges exogenous and endogenous cytidine and 2'-deoxycytidine for UMP synthesis. This chain is Cytidine deaminase, found in Escherichia coli (strain K12).